Consider the following 429-residue polypeptide: MNVLIIGSGGREHALAWKVAQDPRVAKVFVAPGNAGTATEAKCENVAIDVLALEQLADFAAKNVQLTIVGPEAPLVAGVVDLFRERGLDIFGPTAGAAQLEGSKAFTKDFLARHRIPTAAYRNFTEVEPALAYLHEQGAPIVIKADGLAAGKGVIVAMNLDEAEAAVRDMLAGNAFGDAGSRVVIEEFLDGEEASFIVMVDGQNVLPMATSQDHKRVGDGDSGPNTGGMGAYSPAPVVTAEVHQRVLDEVIYPTVRGMAEEGNVYTGFLYAGLMIDKSGAPKVIEFNCRFGDPETQPIMVRLESSLVLLVEAALAKALDKVEATWDPRPTVGVVLAAGGYPGDYAKGEVIEGLAEAAALDGKVFHAGTALKDGQVVTSGGRVLCATAIGESVSAAQQQAYRLAEKIRWNGCFYRKDIGYRAIARERGES.

One can recognise an ATP-grasp domain in the interval 108-315; that stretch reads KDFLARHRIP…LVLLVEAALA (208 aa). 134–195 is an ATP binding site; sequence LHEQGAPIVI…EEFLDGEEAS (62 aa). E285 and N287 together coordinate Mg(2+).

This sequence belongs to the GARS family. Mg(2+) serves as cofactor. The cofactor is Mn(2+).

It carries out the reaction 5-phospho-beta-D-ribosylamine + glycine + ATP = N(1)-(5-phospho-beta-D-ribosyl)glycinamide + ADP + phosphate + H(+). The protein operates within purine metabolism; IMP biosynthesis via de novo pathway; N(1)-(5-phospho-D-ribosyl)glycinamide from 5-phospho-alpha-D-ribose 1-diphosphate: step 2/2. The protein is Phosphoribosylamine--glycine ligase of Pseudomonas aeruginosa (strain ATCC 15692 / DSM 22644 / CIP 104116 / JCM 14847 / LMG 12228 / 1C / PRS 101 / PAO1).